A 642-amino-acid chain; its full sequence is Threonine--tRNA ligase (642 aa).

Residues Asp-239–Pro-530 form a catalytic region. The Zn(2+) site is built by Cys-331, His-382, and His-507.

The protein belongs to the class-II aminoacyl-tRNA synthetase family. As to quaternary structure, homodimer. It depends on Zn(2+) as a cofactor.

The protein resides in the cytoplasm. It catalyses the reaction tRNA(Thr) + L-threonine + ATP = L-threonyl-tRNA(Thr) + AMP + diphosphate + H(+). In terms of biological role, catalyzes the attachment of threonine to tRNA(Thr) in a two-step reaction: L-threonine is first activated by ATP to form Thr-AMP and then transferred to the acceptor end of tRNA(Thr). Also edits incorrectly charged L-seryl-tRNA(Thr). The protein is Threonine--tRNA ligase of Lawsonia intracellularis (strain PHE/MN1-00).